A 120-amino-acid chain; its full sequence is Basic phospholipase A2 homolog LmutTX (120 aa).

Disulfide bonds link C26–C114, C28–C44, C43–C95, C49–C120, C50–C88, C57–C81, and C75–C86.

It belongs to the phospholipase A2 family. Group II subfamily. K49 sub-subfamily. Monomer. As to expression, expressed by the venom gland.

The protein localises to the secreted. Functionally, snake venom phospholipase A2 homolog that lacks enzymatic activity. Shows moderate cytotoxicity against C2C12 myotubes (activity above 200 ug/mL). Also shows antibacterial activity against both Gram-positive and Gram-negative bacteria. A model of myotoxic mechanism has been proposed: an apo Lys49-PLA2 is activated by the entrance of a hydrophobic molecule (e.g. fatty acid) at the hydrophobic channel of the protein leading to a reorientation of a monomer. This reorientation causes a transition between 'inactive' to 'active' states, causing alignment of C-terminal and membrane-docking sites (MDoS) side-by-side and putting the membrane-disruption sites (MDiS) in the same plane, exposed to solvent and in a symmetric position for both monomers. The MDoS region stabilizes the toxin on membrane by the interaction of charged residues with phospholipid head groups. Subsequently, the MDiS region destabilizes the membrane with penetration of hydrophobic residues. This insertion causes a disorganization of the membrane, allowing an uncontrolled influx of ions (i.e. calcium and sodium), and eventually triggering irreversible intracellular alterations and cell death. This Lachesis muta muta (Bushmaster) protein is Basic phospholipase A2 homolog LmutTX.